A 294-amino-acid polypeptide reads, in one-letter code: tRNA dimethylallyltransferase (294 aa).

Position 10–17 (10–17 (GPTAVGKT)) interacts with ATP. 12–17 (TAVGKT) provides a ligand contact to substrate. The interaction with substrate tRNA stretch occupies residues 35-38 (DSQQ).

The protein belongs to the IPP transferase family. Monomer. Mg(2+) serves as cofactor.

It carries out the reaction adenosine(37) in tRNA + dimethylallyl diphosphate = N(6)-dimethylallyladenosine(37) in tRNA + diphosphate. In terms of biological role, catalyzes the transfer of a dimethylallyl group onto the adenine at position 37 in tRNAs that read codons beginning with uridine, leading to the formation of N6-(dimethylallyl)adenosine (i(6)A). The polypeptide is tRNA dimethylallyltransferase (Streptococcus pneumoniae serotype 4 (strain ATCC BAA-334 / TIGR4)).